Reading from the N-terminus, the 389-residue chain is Chalcone synthase (389 aa).

The active site involves C164.

The protein belongs to the thiolase-like superfamily. Chalcone/stilbene synthases family.

It carries out the reaction (E)-4-coumaroyl-CoA + 3 malonyl-CoA + 3 H(+) = 2',4,4',6'-tetrahydroxychalcone + 3 CO2 + 4 CoA. It functions in the pathway secondary metabolite biosynthesis; flavonoid biosynthesis. The primary product of this enzyme is 4,2',4',6'-tetrahydroxychalcone (also termed naringenin-chalcone or chalcone) which can under specific conditions spontaneously isomerize into naringenin. This Casuarina glauca (Swamp oak) protein is Chalcone synthase (CHS1).